The sequence spans 253 residues: H repeat-associated putative transposase YbfD (253 aa).

Belongs to the transposase 11 family.

This is H repeat-associated putative transposase YbfD (ybfD) from Escherichia coli (strain K12).